Consider the following 661-residue polypeptide: UvrABC system protein B (661 aa).

One can recognise a Helicase ATP-binding domain in the interval 25 to 182; it reads AGLSSKKRSQ…NDLINLQYER (158 aa). ATP is bound at residue 38–45; that stretch reads GITGSGKT. Residues 91-114 carry the Beta-hairpin motif; that stretch reads YYDYYQPEAYIARTDTFIEKDSSI. The Helicase C-terminal domain occupies 430–592; it reads QVEDLISEIQ…IIPKTINRAI (163 aa). In terms of domain architecture, UVR spans 621-656; sequence KTHIDKLKKEMLKAASNLEFEQAVKLRDQLKTLEEA.

The protein belongs to the UvrB family. Forms a heterotetramer with UvrA during the search for lesions. Interacts with UvrC in an incision complex.

It localises to the cytoplasm. Functionally, the UvrABC repair system catalyzes the recognition and processing of DNA lesions. A damage recognition complex composed of 2 UvrA and 2 UvrB subunits scans DNA for abnormalities. Upon binding of the UvrA(2)B(2) complex to a putative damaged site, the DNA wraps around one UvrB monomer. DNA wrap is dependent on ATP binding by UvrB and probably causes local melting of the DNA helix, facilitating insertion of UvrB beta-hairpin between the DNA strands. Then UvrB probes one DNA strand for the presence of a lesion. If a lesion is found the UvrA subunits dissociate and the UvrB-DNA preincision complex is formed. This complex is subsequently bound by UvrC and the second UvrB is released. If no lesion is found, the DNA wraps around the other UvrB subunit that will check the other stand for damage. This is UvrABC system protein B from Rickettsia rickettsii (strain Sheila Smith).